The primary structure comprises 436 residues: Anhydro-N-acetylmuramic acid kinase (436 aa).

32-39 is an ATP binding site; the sequence is GTSLDGMD.

This sequence belongs to the anhydro-N-acetylmuramic acid kinase family.

It catalyses the reaction 1,6-anhydro-N-acetyl-beta-muramate + ATP + H2O = N-acetyl-D-muramate 6-phosphate + ADP + H(+). It functions in the pathway amino-sugar metabolism; 1,6-anhydro-N-acetylmuramate degradation. The protein operates within cell wall biogenesis; peptidoglycan recycling. Functionally, catalyzes the specific phosphorylation of 1,6-anhydro-N-acetylmuramic acid (anhMurNAc) with the simultaneous cleavage of the 1,6-anhydro ring, generating MurNAc-6-P. Is required for the utilization of anhMurNAc either imported from the medium or derived from its own cell wall murein, and thus plays a role in cell wall recycling. In Psychrobacter arcticus (strain DSM 17307 / VKM B-2377 / 273-4), this protein is Anhydro-N-acetylmuramic acid kinase.